The primary structure comprises 282 residues: 4-hydroxy-tetrahydrodipicolinate reductase (282 aa).

NAD(+) is bound by residues 14–19 (GAMGRM) and 115–117 (GTT). His171 serves as the catalytic Proton donor/acceptor. His172 contacts (S)-2,3,4,5-tetrahydrodipicolinate. Lys175 functions as the Proton donor in the catalytic mechanism. 181–182 (GT) is a (S)-2,3,4,5-tetrahydrodipicolinate binding site.

Belongs to the DapB family.

It localises to the cytoplasm. The catalysed reaction is (S)-2,3,4,5-tetrahydrodipicolinate + NAD(+) + H2O = (2S,4S)-4-hydroxy-2,3,4,5-tetrahydrodipicolinate + NADH + H(+). It carries out the reaction (S)-2,3,4,5-tetrahydrodipicolinate + NADP(+) + H2O = (2S,4S)-4-hydroxy-2,3,4,5-tetrahydrodipicolinate + NADPH + H(+). The protein operates within amino-acid biosynthesis; L-lysine biosynthesis via DAP pathway; (S)-tetrahydrodipicolinate from L-aspartate: step 4/4. Its function is as follows. Catalyzes the conversion of 4-hydroxy-tetrahydrodipicolinate (HTPA) to tetrahydrodipicolinate. This Prochlorococcus marinus (strain NATL2A) protein is 4-hydroxy-tetrahydrodipicolinate reductase.